Here is a 485-residue protein sequence, read N- to C-terminus: Glutamyl-tRNA(Gln) amidotransferase subunit A (485 aa).

Active-site charge relay system residues include Lys-75 and Ser-150. Catalysis depends on Ser-174, which acts as the Acyl-ester intermediate.

Belongs to the amidase family. GatA subfamily. In terms of assembly, heterotrimer of A, B and C subunits.

It carries out the reaction L-glutamyl-tRNA(Gln) + L-glutamine + ATP + H2O = L-glutaminyl-tRNA(Gln) + L-glutamate + ADP + phosphate + H(+). Its function is as follows. Allows the formation of correctly charged Gln-tRNA(Gln) through the transamidation of misacylated Glu-tRNA(Gln) in organisms which lack glutaminyl-tRNA synthetase. The reaction takes place in the presence of glutamine and ATP through an activated gamma-phospho-Glu-tRNA(Gln). The protein is Glutamyl-tRNA(Gln) amidotransferase subunit A of Trichodesmium erythraeum (strain IMS101).